A 447-amino-acid chain; its full sequence is N-succinylarginine dihydrolase (447 aa).

Residues Ala19–Ser28, Asn110, and His137–Arg138 contribute to the substrate site. The active site involves Glu174. Arg212 contributes to the substrate binding site. His248 is a catalytic residue. Residues Asp250 and Asn359 each coordinate substrate. The active-site Nucleophile is the Cys365.

It belongs to the succinylarginine dihydrolase family. As to quaternary structure, homodimer.

It catalyses the reaction N(2)-succinyl-L-arginine + 2 H2O + 2 H(+) = N(2)-succinyl-L-ornithine + 2 NH4(+) + CO2. The protein operates within amino-acid degradation; L-arginine degradation via AST pathway; L-glutamate and succinate from L-arginine: step 2/5. Its function is as follows. Catalyzes the hydrolysis of N(2)-succinylarginine into N(2)-succinylornithine, ammonia and CO(2). This Escherichia coli O6:K15:H31 (strain 536 / UPEC) protein is N-succinylarginine dihydrolase.